A 186-amino-acid chain; its full sequence is MSSLGNLTVLTGPSGVGKGTIVRKILESHSDVWLSISATTRQPRSGEIDGEHYFFLEKKQFQEIIDKDGFLEWASFSNNFYGTPKKIVKEKIEKGTNVLLEIELEGARQIRKSFPEAFQIFLAPPNLYELEKRIRGRGTETEESIRDRLSIAEKELIAQKEFDAVVINEDIEKAFKEIEGFMGLKL.

The Guanylate kinase-like domain occupies Gly-5–Gly-183. An ATP-binding site is contributed by Gly-12 to Gly-19.

Belongs to the guanylate kinase family.

It is found in the cytoplasm. It carries out the reaction GMP + ATP = GDP + ADP. Essential for recycling GMP and indirectly, cGMP. The polypeptide is Guanylate kinase (Prochlorococcus marinus (strain NATL2A)).